A 140-amino-acid polypeptide reads, in one-letter code: uncharacterized protein (140 aa).

3 helical membrane-spanning segments follow: residues 42–62 (AFLFNFLPLLLLLAFLDIFAS), 65–85 (ASFLAAVLIKILVKSVFSALG), and 96–116 (RASDCLAALEFFDIFLAMLCF).

The protein resides in the membrane. This is an uncharacterized protein from Saccharomyces cerevisiae (strain ATCC 204508 / S288c) (Baker's yeast).